Reading from the N-terminus, the 326-residue chain is Pyruvate dehydrogenase E1 component subunit alpha (326 aa).

Heterodimer of an alpha and a beta chain. It depends on thiamine diphosphate as a cofactor.

The catalysed reaction is N(6)-[(R)-lipoyl]-L-lysyl-[protein] + pyruvate + H(+) = N(6)-[(R)-S(8)-acetyldihydrolipoyl]-L-lysyl-[protein] + CO2. In terms of biological role, the pyruvate dehydrogenase complex catalyzes the overall conversion of pyruvate to acetyl-CoA and CO(2). It contains multiple copies of three enzymatic components: pyruvate dehydrogenase (E1), dihydrolipoamide acetyltransferase (E2) and lipoamide dehydrogenase (E3). This Rickettsia typhi (strain ATCC VR-144 / Wilmington) protein is Pyruvate dehydrogenase E1 component subunit alpha (pdhA).